The chain runs to 88 residues: Small ribosomal subunit protein uS15 (88 aa).

This sequence belongs to the universal ribosomal protein uS15 family. As to quaternary structure, part of the 30S ribosomal subunit. Forms a bridge to the 50S subunit in the 70S ribosome, contacting the 23S rRNA.

Its function is as follows. One of the primary rRNA binding proteins, it binds directly to 16S rRNA where it helps nucleate assembly of the platform of the 30S subunit by binding and bridging several RNA helices of the 16S rRNA. Forms an intersubunit bridge (bridge B4) with the 23S rRNA of the 50S subunit in the ribosome. In Acidobacterium capsulatum (strain ATCC 51196 / DSM 11244 / BCRC 80197 / JCM 7670 / NBRC 15755 / NCIMB 13165 / 161), this protein is Small ribosomal subunit protein uS15.